The primary structure comprises 397 residues: Phosphoglycerate kinase (397 aa).

Residues D21 to N23, R36, H59 to R62, R118, and R151 each bind substrate. ATP-binding positions include K201, E323, and G353–T356.

This sequence belongs to the phosphoglycerate kinase family. As to quaternary structure, monomer.

It is found in the cytoplasm. It catalyses the reaction (2R)-3-phosphoglycerate + ATP = (2R)-3-phospho-glyceroyl phosphate + ADP. It functions in the pathway carbohydrate degradation; glycolysis; pyruvate from D-glyceraldehyde 3-phosphate: step 2/5. The sequence is that of Phosphoglycerate kinase from Bartonella quintana (strain Toulouse) (Rochalimaea quintana).